A 103-amino-acid polypeptide reads, in one-letter code: MTVLERLAATVEARKGVDPDSSWTAKLLARGPEKCAEKFGEEAVEAIIEAVRGDRDRLASEAADVLYHLIVMLAARDVTLAEVMAVLEAREGTSGIAEKAGRG.

Belongs to the PRA-PH family.

The protein localises to the cytoplasm. The enzyme catalyses 1-(5-phospho-beta-D-ribosyl)-ATP + H2O = 1-(5-phospho-beta-D-ribosyl)-5'-AMP + diphosphate + H(+). It participates in amino-acid biosynthesis; L-histidine biosynthesis; L-histidine from 5-phospho-alpha-D-ribose 1-diphosphate: step 2/9. In Cereibacter sphaeroides (strain KD131 / KCTC 12085) (Rhodobacter sphaeroides), this protein is Phosphoribosyl-ATP pyrophosphatase.